Reading from the N-terminus, the 64-residue chain is DNA gyrase inhibitor YacG (64 aa).

4 residues coordinate Zn(2+): Cys7, Cys10, Cys26, and Cys30. Residues 43–64 (KRIPGPINPDLLPYPDEGEQWQ) form a disordered region.

The protein belongs to the DNA gyrase inhibitor YacG family. As to quaternary structure, interacts with GyrB. Zn(2+) is required as a cofactor.

Functionally, inhibits all the catalytic activities of DNA gyrase by preventing its interaction with DNA. Acts by binding directly to the C-terminal domain of GyrB, which probably disrupts DNA binding by the gyrase. The sequence is that of DNA gyrase inhibitor YacG from Aeromonas salmonicida (strain A449).